The following is a 154-amino-acid chain: Ribonuclease HI (154 aa).

An RNase H type-1 domain is found at 1 to 142; that stretch reads MQKQIEIFTD…CDQLAKAGAE (142 aa). Positions 10, 48, 70, and 134 each coordinate Mg(2+).

It belongs to the RNase H family. As to quaternary structure, monomer. Mg(2+) is required as a cofactor.

It is found in the cytoplasm. The catalysed reaction is Endonucleolytic cleavage to 5'-phosphomonoester.. Functionally, endonuclease that specifically degrades the RNA of RNA-DNA hybrids. This is Ribonuclease HI (rnhA) from Pasteurella multocida (strain Pm70).